The primary structure comprises 90 residues: MMKQQFFLFLAVIVMISSVIEAGRGKEIMKNIKEKLTEVKDKMKHSWNKLTSMSEYACPVIEKWCEDHCAAKKAIGKCEDTECKCLKLRK.

Residues 1–22 form the signal peptide; it reads MMKQQFFLFLAVIVMISSVIEA. Residues 23–29 constitute a propeptide that is removed on maturation; sequence GRGKEIM. One can recognise a BetaSPN-type CS-alpha/beta domain in the interval 55–90; it reads EYACPVIEKWCEDHCAAKKAIGKCEDTECKCLKLRK. Disulfide bonds link Cys58–Cys78, Cys65–Cys83, and Cys69–Cys85.

This sequence belongs to the long chain scorpion toxin family. Class 2 subfamily. As to expression, expressed by the venom gland.

It is found in the secreted. Its function is as follows. This recombinant peptide reversibly and dose-dependently inhibits the transient outward potassium current (I(To)) of rabbit atrial myocyte and prolongs the action potential duration of rabbit atrial myocyte without affecting the action potential amplitude. Thus, the voltage-gated potassium channels Kv4.1/KCND1, Kv4.2/KCND2, Kv4.3/KCND3 may be the target of this toxin. The polypeptide is Potassium channel toxin BmTXK-beta (Olivierus martensii (Manchurian scorpion)).